The following is a 92-amino-acid chain: DNA-directed RNA polymerase subunit Rpo11 (92 aa).

It belongs to the archaeal Rpo11/eukaryotic RPB11/RPC19 RNA polymerase subunit family. In terms of assembly, part of the 13-subunit RNA polymerase complex.

It localises to the cytoplasm. The catalysed reaction is RNA(n) + a ribonucleoside 5'-triphosphate = RNA(n+1) + diphosphate. In terms of biological role, DNA-dependent RNA polymerase (RNAP) catalyzes the transcription of DNA into RNA using the four ribonucleoside triphosphates as substrates. The chain is DNA-directed RNA polymerase subunit Rpo11 from Saccharolobus solfataricus (strain ATCC 35092 / DSM 1617 / JCM 11322 / P2) (Sulfolobus solfataricus).